We begin with the raw amino-acid sequence, 102 residues long: uncharacterized protein (102 aa).

3 helical membrane passes run 14 to 34 (IKNWINFIKPIITIVGIVISA), 35 to 55 (VAFTISILWGMLFLILFLILI), and 76 to 96 (ILSIIGSIIIISIIVYSHCYI).

It is found in the cell membrane. This is an uncharacterized protein from Methanocaldococcus jannaschii (strain ATCC 43067 / DSM 2661 / JAL-1 / JCM 10045 / NBRC 100440) (Methanococcus jannaschii).